Reading from the N-terminus, the 220-residue chain is ATP-dependent dethiobiotin synthetase BioD (220 aa).

Position 12–17 (12–17 (DVGKTI)) interacts with ATP. Threonine 16 provides a ligand contact to Mg(2+). Lysine 37 is an active-site residue. Threonine 41 contributes to the substrate binding site. Residues aspartate 49, 107-110 (EGAG), 167-168 (GS), and 197-199 (PAG) contribute to the ATP site. Mg(2+)-binding residues include aspartate 49 and glutamate 107.

It belongs to the dethiobiotin synthetase family. In terms of assembly, homodimer. Mg(2+) serves as cofactor.

Its subcellular location is the cytoplasm. The enzyme catalyses (7R,8S)-7,8-diammoniononanoate + CO2 + ATP = (4R,5S)-dethiobiotin + ADP + phosphate + 3 H(+). Its pathway is cofactor biosynthesis; biotin biosynthesis; biotin from 7,8-diaminononanoate: step 1/2. Its function is as follows. Catalyzes a mechanistically unusual reaction, the ATP-dependent insertion of CO2 between the N7 and N8 nitrogen atoms of 7,8-diaminopelargonic acid (DAPA, also called 7,8-diammoniononanoate) to form a ureido ring. The protein is ATP-dependent dethiobiotin synthetase BioD of Corynebacterium efficiens (strain DSM 44549 / YS-314 / AJ 12310 / JCM 11189 / NBRC 100395).